A 247-amino-acid polypeptide reads, in one-letter code: Adenosylcobinamide-GDP ribazoletransferase (247 aa).

Transmembrane regions (helical) follow at residues 34 to 54 (IVMF…IFIL), 59 to 79 (CGIP…TGGF), 113 to 133 (GGLA…ELAL), 138 to 158 (MLAA…LLMY), 171 to 191 (VFIG…AVIV), and 194 to 214 (VLLP…AIFI).

This sequence belongs to the CobS family. The cofactor is Mg(2+).

The protein resides in the cell inner membrane. It catalyses the reaction alpha-ribazole + adenosylcob(III)inamide-GDP = adenosylcob(III)alamin + GMP + H(+). It carries out the reaction alpha-ribazole 5'-phosphate + adenosylcob(III)inamide-GDP = adenosylcob(III)alamin 5'-phosphate + GMP + H(+). Its pathway is cofactor biosynthesis; adenosylcobalamin biosynthesis; adenosylcobalamin from cob(II)yrinate a,c-diamide: step 7/7. Its function is as follows. Joins adenosylcobinamide-GDP and alpha-ribazole to generate adenosylcobalamin (Ado-cobalamin). Also synthesizes adenosylcobalamin 5'-phosphate from adenosylcobinamide-GDP and alpha-ribazole 5'-phosphate. The protein is Adenosylcobinamide-GDP ribazoletransferase of Salmonella schwarzengrund (strain CVM19633).